A 468-amino-acid polypeptide reads, in one-letter code: MSSGKIAQVVGPVVDVVFANGEKLPEINNALIVYKDSDKKQKIVLEVALELGDGMVRTIAMESTDGLTRGLEVLDTGRAISVPVGKETLGRVFNVLGETIDLDEPFAADAAREPIHKKAPAFDELSTSSEILETGIKVIDLLAPYLKGGKVGLFGGAGVGKTVLIQELIHNIAQEHGGISVFTGVGERTREGNDLYWEMKESGVIEKTAMVFGQMNEPPGARMRVALTGLTIAEYFRDVEGQDVLLFIDNIFRFTQAGSEVSALLGRMPSAVGYQPTLATEMGQLQERITSTNKGSVTSIQAIYVPADDYTDPAPATAFAHLDSTTNLERKLTQMGIYPAVDPLASSSRALSPEIVGQEHYEVATEVQRVLQRYRELQDIIAILGMDELSDDEKVLVGRARRIQFFLSQNFNVAEQFTGQPGSYVPVADTVRSFKEILEGKYDHIPEDAFRSVGPIEDVLEKAKSMGY.

155-162 provides a ligand contact to ATP; the sequence is GGAGVGKT.

Belongs to the ATPase alpha/beta chains family. As to quaternary structure, F-type ATPases have 2 components, CF(1) - the catalytic core - and CF(0) - the membrane proton channel. CF(1) has five subunits: alpha(3), beta(3), gamma(1), delta(1), epsilon(1). CF(0) has three main subunits: a(1), b(2) and c(9-12). The alpha and beta chains form an alternating ring which encloses part of the gamma chain. CF(1) is attached to CF(0) by a central stalk formed by the gamma and epsilon chains, while a peripheral stalk is formed by the delta and b chains.

The protein resides in the cell membrane. It catalyses the reaction ATP + H2O + 4 H(+)(in) = ADP + phosphate + 5 H(+)(out). Produces ATP from ADP in the presence of a proton gradient across the membrane. The catalytic sites are hosted primarily by the beta subunits. The chain is ATP synthase subunit beta from Streptococcus uberis (strain ATCC BAA-854 / 0140J).